Reading from the N-terminus, the 182-residue chain is Pyruvoyl-dependent arginine decarboxylase (182 aa).

Position 44 is a pyruvic acid (Ser) (serine 44).

It belongs to the PdaD family. Requires pyruvate as cofactor.

The catalysed reaction is L-arginine + H(+) = agmatine + CO2. This is Pyruvoyl-dependent arginine decarboxylase from Thermoplasma volcanium (strain ATCC 51530 / DSM 4299 / JCM 9571 / NBRC 15438 / GSS1).